Here is a 685-residue protein sequence, read N- to C-terminus: Twinkle mtDNA helicase (685 aa).

A mitochondrion-targeting transit peptide spans Met1–Leu31. The tract at residues Met1–Ser122 is contributes to single strand DNA binding activity. Positions Pro54–Ser214 are N-terminal region (NTR). The tract at residues Ser122–Gln373 is required for hexamers formation and DNA helicase activity. A primase-like domain region spans residues Ser215–Arg335. One can recognise an SF4 helicase domain in the interval Val385–Lys636. Residues His406 to Gln591 form a maybe required for stable oligomeric structure region. Position 416-423 (Gly416–Thr423) interacts with ATP. Residues Arg454–Leu482 are a coiled coil. Residues Lys641–Gly685 are might negatively regulate ATPase activity. The segment at Ile642 to Gly685 is disordered.

In terms of assembly, homohexamer (via C-terminus), which assembles in a ring-like structure. Homoheptamer, which assembles in a ring-like structure. Homooctamer, which assembles in a ring-like structure. Oligomers may sequentially eject two monomers (octamer&gt;heptamer&gt;hexamer) upon DNA binding. Oligomerization is Mg(2+), nucleotide and DNA-independent, however, Mg(2+) and nucleotide stabilize the homohexameric form. Interacts with POLG in vitro. Interacts with LONP1. Ubiquitous with the highest levels in the liver, heart and kidneys. The skeletal muscle, brain and testis showed lower but detectable expression. Expression is coregulated with MRPL43.

It is found in the mitochondrion matrix. It localises to the mitochondrion nucleoid. The protein localises to the mitochondrion inner membrane. It carries out the reaction ATP + H2O = ADP + phosphate + H(+). It catalyses the reaction Couples ATP hydrolysis with the unwinding of duplex DNA at the replication fork by translocating in the 5'-3' direction. This creates two antiparallel DNA single strands (ssDNA). The leading ssDNA polymer is the template for DNA polymerase III holoenzyme which synthesizes a continuous strand.. Its function is as follows. Mitochondrial helicase involved in mtDNA replication and repair. Might have a role in mtDNA repair. Has DNA strand separation activity needed to form a processive replication fork for leading strand synthesis which is catalyzed by the formation of a replisome complex with POLG and mtSDB. Preferentially unwinds DNA substrates with pre-existing 5'-and 3'- single-stranded tails but is also active on a 5'- flap substrate. Can dissociate the invading strand of immobile or mobile D-loop DNA structures irrespective of the single strand polarity of the third strand. In addition to its DNA strand separation activity, also has DNA strand annealing, DNA strand-exchange and DNA branch migration activities. This is Twinkle mtDNA helicase from Mus musculus (Mouse).